A 425-amino-acid chain; its full sequence is MLDSRFVREQADRARQALAHRNEDPVMIDAFLGYDTARKDILAEIEALRHKRNVASDTIAQMKKAGQTADEPIAAMREVSAKIKELEVLLAENQEKSDALLMRIPNIPHASVPIGPDESANVTEREVGTPPAFDFAPRPHEEIGEALGIFDFARAAKIAGARFPLYKGAGALMERALINFMLDIHTTEHGYTECLPPLMVNAKTMTGTGQLPKFEEDLFKLERWGFYLIPTAEVPVTNIFADEILNEADLPIKYTAYTPCFRSEAGSYGKDTKGLIRQHQFNKVELVKFAHPEHSYDELEKLLADAETILQRLGLAYRVITLCSGDMGFSAAKTYDIEVWFPAQNRYREISSCSNFEDFQARRANIRFKRPGQKGTGFVHTLNGSGLAVGRTLAAILENFQTKEGAVEIPDTLRPYMRNMAVLSL.

231–233 (TAE) contacts L-serine. 262-264 (RSE) contributes to the ATP binding site. Position 285 (E285) interacts with L-serine. 349–352 (EISS) provides a ligand contact to ATP. S385 is an L-serine binding site.

This sequence belongs to the class-II aminoacyl-tRNA synthetase family. Type-1 seryl-tRNA synthetase subfamily. In terms of assembly, homodimer. The tRNA molecule binds across the dimer.

The protein localises to the cytoplasm. The enzyme catalyses tRNA(Ser) + L-serine + ATP = L-seryl-tRNA(Ser) + AMP + diphosphate + H(+). It carries out the reaction tRNA(Sec) + L-serine + ATP = L-seryl-tRNA(Sec) + AMP + diphosphate + H(+). It functions in the pathway aminoacyl-tRNA biosynthesis; selenocysteinyl-tRNA(Sec) biosynthesis; L-seryl-tRNA(Sec) from L-serine and tRNA(Sec): step 1/1. Its function is as follows. Catalyzes the attachment of serine to tRNA(Ser). Is also able to aminoacylate tRNA(Sec) with serine, to form the misacylated tRNA L-seryl-tRNA(Sec), which will be further converted into selenocysteinyl-tRNA(Sec). The chain is Serine--tRNA ligase from Desulfosudis oleivorans (strain DSM 6200 / JCM 39069 / Hxd3) (Desulfococcus oleovorans).